A 1047-amino-acid polypeptide reads, in one-letter code: Cation efflux system protein CusA (1047 aa).

The next 12 helical transmembrane spans lie at 14–34, 338–358, 363–383, 391–411, 446–466, 485–505, 532–552, 871–891, 898–918, 928–948, 985–1005, and 1012–1032; these read FLVL…IINT, LSGK…LFLW, ALVA…VMHF, MSLG…IVMI, VGPA…PIFT, AMAG…GYWI, VLHW…TVLW, KLKL…YLAF, LLII…LWWM, TGFI…LMYL, AMTV…TGAG, and IAAP…FIIP.

It belongs to the resistance-nodulation-cell division (RND) (TC 2.A.6) family. In terms of assembly, the cus efflux system is composed of CusA, CusB, CusC and CusF.

It localises to the cell inner membrane. Part of a cation efflux system that mediates resistance to copper and silver. This chain is Cation efflux system protein CusA (cusA), found in Escherichia coli (strain K12).